Consider the following 113-residue polypeptide: Molt-inhibiting hormone (113 aa).

Residues 1–35 (MMSLAHSKFSCQRTRLLAVVLLAALWSSSLQQAAA) form the signal peptide. Cystine bridges form between cysteine 42/cysteine 79, cysteine 59/cysteine 75, and cysteine 62/cysteine 88.

Belongs to the arthropod CHH/MIH/GIH/VIH hormone family.

The protein resides in the secreted. Inhibits Y-organs where molting hormone (ecdysteroid) is secreted. A molting cycle is initiated when MIH secretion diminishes or stops. This is Molt-inhibiting hormone from Callinectes sapidus (Blue crab).